A 64-amino-acid polypeptide reads, in one-letter code: Epidermal growth factor (64 aa).

The first 21 residues, 1–21, serve as a signal peptide directing secretion; it reads MMRHLLLVGAAILIFVSDAQA. At glutamine 22 the chain carries Pyrrolidone carboxylic acid. In terms of domain architecture, EGF-like spans 25–61; that stretch reads GEDPCQIVRCSYGANCIAYGDTAICECPFGYSGIRCQ. 3 disulfides stabilise this stretch: cysteine 29/cysteine 40, cysteine 34/cysteine 49, and cysteine 51/cysteine 60.

In terms of tissue distribution, albumen gland. Up-regulated in adult CNS after axotomy.

It localises to the secreted. In terms of biological role, induces neurite outgrowth in specific adult neurons in vitro. The protein is Epidermal growth factor of Lymnaea stagnalis (Great pond snail).